The primary structure comprises 136 residues: Large ribosomal subunit protein uL16 (136 aa).

Belongs to the universal ribosomal protein uL16 family. In terms of assembly, part of the 50S ribosomal subunit.

Its function is as follows. Binds 23S rRNA and is also seen to make contacts with the A and possibly P site tRNAs. This chain is Large ribosomal subunit protein uL16, found in Buchnera aphidicola subsp. Acyrthosiphon pisum (strain 5A).